Reading from the N-terminus, the 296-residue chain is 4-hydroxybenzoate octaprenyltransferase (296 aa).

A run of 8 helical transmembrane segments spans residues 28–48 (IGTLLLLWPTYWALWLASDGI), 51–71 (LAVLAAFTIGTFLMRSAGCVI), 102–122 (LLLTAFLCLLAALCLIPLNHL), 143–163 (FFPIPQLYLGLAFSFGIPMAF), 174–194 (AWILFAANVLWTLAYDTVYAM), 212–232 (FGRYDIAAVMLCHGGFTLLMA), 233–253 (VLGAVIGAAWAYWTAIPIVLL), and 274–294 (FLANNRIGWVWFTAIFAHTFF).

It belongs to the UbiA prenyltransferase family. The cofactor is Mg(2+).

Its subcellular location is the cell inner membrane. The enzyme catalyses all-trans-octaprenyl diphosphate + 4-hydroxybenzoate = 4-hydroxy-3-(all-trans-octaprenyl)benzoate + diphosphate. It participates in cofactor biosynthesis; ubiquinone biosynthesis. Its function is as follows. Catalyzes the prenylation of para-hydroxybenzoate (PHB) with an all-trans polyprenyl group. Mediates the second step in the final reaction sequence of ubiquinone-8 (UQ-8) biosynthesis, which is the condensation of the polyisoprenoid side chain with PHB, generating the first membrane-bound Q intermediate 3-octaprenyl-4-hydroxybenzoate. In Neisseria meningitidis serogroup B (strain ATCC BAA-335 / MC58), this protein is 4-hydroxybenzoate octaprenyltransferase.